A 537-amino-acid polypeptide reads, in one-letter code: Syncytin-2 (537 aa).

The first 15 residues, 1–15 (MGLLLLVLILTPLLA), serve as a signal peptide directing secretion. Topologically, residues 16-478 (AYRHPDFPLL…GWLNWEGTWK (463 aa)) are extracellular. Residues 43-46 (CWLC) carry the CXXC motif. Disulfide bonds link Cys43–Cys46, Cys43–Cys439, and Cys431–Cys438. N-linked (GlcNAc...) asparagine glycosylation is found at Asn133, Asn146, Asn177, Asn220, Asn241, Asn247, Asn312, and Asn332. Residues 354–374 (FIPLLAGLGILAGTGTGIAGI) are fusion peptide. The short motif at 414–430 (LQNRRGLDMLTAAQGGI) is the CKS-17 element. Positions 431–439 (CLALDEKCC) match the CX6CC motif. N-linked (GlcNAc...) asparagine glycosylation occurs at Asn443. The chain crosses the membrane as a helical span at residues 479-499 (WFSWVLPFIGPLVSLLLLLLF). At 500-537 (GPCLLNLITQFVSSRLQAIKLQTNGAGCRPRNIQESPF) the chain is on the cytoplasmic side.

This sequence belongs to the gamma type-C retroviral envelope protein family. HERV class-I FRD env subfamily. In terms of assembly, the surface and transmembrane proteins form a heterodimer. They are attached by non-covalent interactions or by a labile interchain disulfide bond. In terms of processing, specific enzymatic cleavages in vivo yield the mature SU and TM proteins. Post-translationally, the CXXC motif is highly conserved across a broad range of retroviral envelope proteins. It is thought to participate in the formation of a labile disulfide bond possibly with the CX6CC motif present in the transmembrane protein.

The protein resides in the virion. It localises to the cell membrane. Its function is as follows. This endogenous retroviral envelope protein has retained its original fusogenic properties and participates in trophoblast fusion and the formation of a syncytium during placenta morphogenesis. The interaction with MFSD2A is apparently important for this process. In terms of biological role, endogenous envelope proteins may have kept, lost or modified their original function during evolution but this one can still make pseudotypes with MLV, HIV-1 or SIV-1 virions and confer infectivity. Retroviral envelope proteins mediate receptor recognition and membrane fusion during early infection. The surface protein mediates receptor recognition, while the transmembrane protein anchors the envelope heterodimer to the viral membrane through one transmembrane domain. The other hydrophobic domain, called fusion peptide, mediates fusion of the viral membrane with the target cell membrane. This Macaca fascicularis (Crab-eating macaque) protein is Syncytin-2 (ERVFRD-1).